The following is a 398-amino-acid chain: Phosphoglycerate kinase (398 aa).

Residues 23 to 25 (DLN), R38, 61 to 64 (HFGR), R120, and R153 contribute to the substrate site. Residues K203, E325, and 355-358 (GGDT) contribute to the ATP site.

The protein belongs to the phosphoglycerate kinase family. Monomer.

It is found in the cytoplasm. The enzyme catalyses (2R)-3-phosphoglycerate + ATP = (2R)-3-phospho-glyceroyl phosphate + ADP. The protein operates within carbohydrate degradation; glycolysis; pyruvate from D-glyceraldehyde 3-phosphate: step 2/5. This chain is Phosphoglycerate kinase, found in Mesorhizobium japonicum (strain LMG 29417 / CECT 9101 / MAFF 303099) (Mesorhizobium loti (strain MAFF 303099)).